Here is a 571-residue protein sequence, read N- to C-terminus: Urease subunit alpha (571 aa).

The Urease domain occupies 133 to 571 (GGIDTHVHFI…LPLTQRYFLF (439 aa)). Residues H138, H140, and K221 each coordinate Ni(2+). At K221 the chain carries N6-carboxylysine. H223 contributes to the substrate binding site. Residues H250 and H276 each contribute to the Ni(2+) site. H324 functions as the Proton donor in the catalytic mechanism. D364 is a binding site for Ni(2+).

It belongs to the metallo-dependent hydrolases superfamily. Urease alpha subunit family. In terms of assembly, heterotrimer of UreA (gamma), UreB (beta) and UreC (alpha) subunits. Three heterotrimers associate to form the active enzyme. It depends on Ni cation as a cofactor. Post-translationally, carboxylation allows a single lysine to coordinate two nickel ions.

Its subcellular location is the cytoplasm. It catalyses the reaction urea + 2 H2O + H(+) = hydrogencarbonate + 2 NH4(+). Its pathway is nitrogen metabolism; urea degradation; CO(2) and NH(3) from urea (urease route): step 1/1. This chain is Urease subunit alpha, found in Staphylococcus aureus (strain MRSA252).